We begin with the raw amino-acid sequence, 353 residues long: Vomeronasal type-1 receptor 1 (353 aa).

At 1–56 (MVGDTLKLLSPLMTRYFFLLFYSTDSSDLNENQHPLDFDEMAFGKVKSGISFLIQT) the chain is on the extracellular side. The helical transmembrane segment at 57-77 (GVGILGNSFLLCFYNLILFTG) threads the bilayer. Residues 78–84 (HKLRPTD) are Cytoplasmic-facing. The helical transmembrane segment at 85–105 (LILSQLALANSMVLFFKGIPQ) threads the bilayer. The Extracellular portion of the chain corresponds to 106-132 (TMAAFGLKYLLNDTGCKFVFYYHRVGT). Residue asparagine 117 is glycosylated (N-linked (GlcNAc...) asparagine). The helical transmembrane segment at 133 to 153 (RVSLSTICLLNGFQAIKLNPS) threads the bilayer. At 154–169 (ICRWMEIKIRSPRFID) the chain is on the cytoplasmic side. A helical membrane pass occupies residues 170-190 (FCCLLCWAPHVLMNASVLLLV). Over 191–226 (NGPLNSKNSSAKNNYGYCSYKASKRFSSLHAVLYFS) the chain is Extracellular. N-linked (GlcNAc...) asparagine glycosylation occurs at asparagine 198. A helical membrane pass occupies residues 227-247 (PDFMSLGFMVWASGSMVFFLY). At 248–274 (RHKQQVQHNHSNRLSCRPSQEARATHT) the chain is on the cytoplasmic side. A helical membrane pass occupies residues 275–295 (IMVLVSSFFVFYSVHSFLTIW). Residues 296–303 (TTVVANPG) are Extracellular-facing. A helical membrane pass occupies residues 304–324 (QWIVTNSVLVASCFPARSPFV). Topologically, residues 325–353 (LIMSDTHISQFCFACRTRKTLFPNLVVMP) are cytoplasmic.

It belongs to the G-protein coupled receptor 1 family. As to expression, expressed in the olfactory mucosa, very low expression in brain, lung and kidney.

The protein localises to the cell membrane. In terms of biological role, putative pheromone receptor. This chain is Vomeronasal type-1 receptor 1 (VN1R1), found in Homo sapiens (Human).